The sequence spans 405 residues: Polyadenylate-binding protein RBP45B (405 aa).

A compositionally biased stretch (pro residues) spans 1 to 19; sequence MMQQPPPGGILPHHAPPPS. A disordered region spans residues 1-54; it reads MMQQPPPGGILPHHAPPPSAQQQYGYQQPYGIAGAAPPPPQMWNPQAAAPPSVQ. A compositionally biased stretch (low complexity) spans 20–35; sequence AQQQYGYQQPYGIAGA. RRM domains lie at 62-143, 155-234, and 261-333; these read RTLW…WASL, YTIF…PAAS, and TTVF…WGRS. The tract at residues 379-405 is disordered; it reads GGYQQTPQAGQQPPQQPPQQQQVGFSY. The segment covering 380-405 has biased composition (low complexity); sequence GYQQTPQAGQQPPQQPPQQQQVGFSY.

This sequence belongs to the polyadenylate-binding RBP45 family. As to quaternary structure, both isoform 1 and isoform 2 interact with poly(A)+ RNA in nucleus. Expressed in roots, leaves, stems, flowers, siliques, and seedlings. Present in immature anther tissues (tapetum cells) and mature pollen grains.

The protein resides in the nucleus. In terms of biological role, heterogeneous nuclear ribonucleoprotein (hnRNP)-protein binding the poly(A) tail of mRNA and probably involved in some steps of pre-mRNA maturation. In Arabidopsis thaliana (Mouse-ear cress), this protein is Polyadenylate-binding protein RBP45B (RBP45B).